A 1157-amino-acid polypeptide reads, in one-letter code: uncharacterized protein (1157 aa).

The span at 1 to 10 shows a compositional bias: basic and acidic residues; sequence MDPHWKRHDS. Disordered stretches follow at residues 1-35, 159-233, and 478-498; these read MDPHWKRHDSSNIPTQPSPSASPKSNKPSSAQRFG, QTTP…SVEP, and KNQSSHRRNSSTSSGETGKGP. 2 stretches are compositionally biased toward low complexity: residues 18 to 31 and 181 to 197; these read SPSASPKSNKPSSA and SAGTDPFSPVSPSNPNF. Polar residues predominate over residues 208–228; it reads QEWQQSPLESPLSMHSLQESL. The 74-residue stretch at 501 to 574 folds into the CSD2 domain; sequence VWFKPSDKRI…KVEYKAILHD (74 aa). An RNB domain is found at 608 to 921; it reads LRDKLTFMIG…ICVQRQLREA (314 aa). The DIS3L2 C-terminal domain occupies 973-1030; the sequence is GLVKHKAFVLAVDQEYIDIVIYEFGLERRISLDLLPLSNCDFNEQKHELYLSWRTNAS. The disordered stretch occupies residues 1084–1113; sequence YSKARGNDSTSKTAKSSSGNQDISGDGKLH. The span at 1090-1106 shows a compositional bias: polar residues; sequence NDSTSKTAKSSSGNQDI.

It belongs to the RNR ribonuclease family.

The protein resides in the cytoplasm. This is an uncharacterized protein from Schizosaccharomyces pombe (strain 972 / ATCC 24843) (Fission yeast).